Here is a 266-residue protein sequence, read N- to C-terminus: Killer cell lectin-like receptor 6 (266 aa).

Topologically, residues 1-44 (MSEPEVTYSTVRLHKSSRLQKLVRHEETQGPREAGYRKCSVCWQ) are cytoplasmic. Residues 45 to 66 (LIVKALGILCFLLLITVAVLAV) form a helical; Signal-anchor for type II membrane protein membrane-spanning segment. Topologically, residues 67-266 (KIFQYGQHNQ…CGKKLDKFPH (200 aa)) are extracellular. N-linked (GlcNAc...) asparagine glycosylation is found at N87 and N104. A C-type lectin domain is found at 143-261 (GVKYWFCYRT…SHYCICGKKL (119 aa)). Disulfide bonds link C149–C154, C167–C255, C171–C257, and C236–C249.

In terms of assembly, homodimer; disulfide-linked.

The protein localises to the membrane. Its function is as follows. Receptor on natural killer (NK) cells for class I MHC. The polypeptide is Killer cell lectin-like receptor 6 (Klra6) (Mus musculus (Mouse)).